A 265-amino-acid polypeptide reads, in one-letter code: ClpXP adapter protein SpxH (265 aa).

It belongs to the SpxH family. In terms of assembly, interacts with Spx.

The protein resides in the cytoplasm. In terms of biological role, adapter protein required for efficient degradation of Spx by ClpXP under non-stress conditions. Interaction with Spx stabilizes Spx and exposes the C-terminus of Spx for recognition and proteolysis by ClpXP. The chain is ClpXP adapter protein SpxH from Staphylococcus haemolyticus (strain JCSC1435).